We begin with the raw amino-acid sequence, 204 residues long: Proteasome subunit beta 1 (204 aa).

The propeptide at 1–9 (MSYEYGTGA) is removed in mature form; by autocatalysis. Thr-10 functions as the Nucleophile in the catalytic mechanism.

The protein belongs to the peptidase T1B family. As to quaternary structure, the 20S proteasome core is composed of 14 alpha and 14 beta subunits that assemble into four stacked heptameric rings, resulting in a barrel-shaped structure. The two inner rings, each composed of seven catalytic beta subunits, are sandwiched by two outer rings, each composed of seven alpha subunits. The catalytic chamber with the active sites is on the inside of the barrel. Has a gated structure, the ends of the cylinder being occluded by the N-termini of the alpha-subunits. Is capped at one or both ends by the proteasome regulatory ATPase, PAN.

Its subcellular location is the cytoplasm. The enzyme catalyses Cleavage of peptide bonds with very broad specificity.. With respect to regulation, the formation of the proteasomal ATPase PAN-20S proteasome complex, via the docking of the C-termini of PAN into the intersubunit pockets in the alpha-rings, triggers opening of the gate for substrate entry. Interconversion between the open-gate and close-gate conformations leads to a dynamic regulation of the 20S proteasome proteolysis activity. Component of the proteasome core, a large protease complex with broad specificity involved in protein degradation. The protein is Proteasome subunit beta 1 of Hyperthermus butylicus (strain DSM 5456 / JCM 9403 / PLM1-5).